Here is a 371-residue protein sequence, read N- to C-terminus: Histidinol-phosphate aminotransferase 2 (371 aa).

K232 carries the post-translational modification N6-(pyridoxal phosphate)lysine.

Belongs to the class-II pyridoxal-phosphate-dependent aminotransferase family. Histidinol-phosphate aminotransferase subfamily. Homodimer. Pyridoxal 5'-phosphate serves as cofactor.

The enzyme catalyses L-histidinol phosphate + 2-oxoglutarate = 3-(imidazol-4-yl)-2-oxopropyl phosphate + L-glutamate. The protein operates within amino-acid biosynthesis; L-histidine biosynthesis; L-histidine from 5-phospho-alpha-D-ribose 1-diphosphate: step 7/9. The sequence is that of Histidinol-phosphate aminotransferase 2 from Methylococcus capsulatus (strain ATCC 33009 / NCIMB 11132 / Bath).